The primary structure comprises 115 residues: uncharacterized protein (115 aa).

This is an uncharacterized protein from Human cytomegalovirus (strain AD169) (HHV-5).